The chain runs to 2648 residues: E3 ubiquitin-protein ligase hecd-1 (2648 aa).

ANK repeat units lie at residues 374–403 (VGQS…DVNK) and 405–434 (HKSS…NPDL). Residues 433 to 455 (DLRDEDGKTALDKARERSDDDHN) are compositionally biased toward basic and acidic residues. 3 disordered regions span residues 433 to 494 (DLRD…ELPN), 645 to 714 (PMEI…KATA), and 1376 to 1400 (DPPK…ALPP). Polar residues-rich tracts occupy residues 478 to 489 (ASTSKQPGTSTK), 652 to 661 (NQPSSSTAVP), and 670 to 688 (TVPS…NPST). Composition is skewed to low complexity over residues 696–714 (SSTP…KATA) and 1383–1400 (PAGT…ALPP). Residues 1438 to 1510 (RSRGSYKISE…NFDIERVTST (73 aa)) enclose the MIB/HERC2 domain. Disordered regions lie at residues 1538-1562 (YTPK…GSSR), 1575-1629 (KNTT…SLQH), 1652-1796 (NQEP…LLGG), and 1811-1836 (ESLS…GKKP). Composition is skewed to low complexity over residues 1543–1562 (TGGP…GSSR) and 1575–1586 (KNTTPAGTPSSG). Polar residues predominate over residues 1610–1629 (TSGPSVASTGQAASAESLQH). The segment covering 1653–1666 (QEPEDEPMGGEESD) has biased composition (acidic residues). The segment covering 1667-1696 (SAASMRSAASSNSQMSMGSSSQQQQQQDSD) has biased composition (low complexity). Acidic residues-rich tracts occupy residues 1736-1746 (TDGDADADETN) and 1756-1783 (DAME…DESS). Low complexity predominate over residues 1812 to 1823 (SLSDASSSAKDA). An HECT domain is found at 2240–2648 (FHADRKAVLE…AINEKGFHLN (409 aa)). C2617 acts as the Glycyl thioester intermediate in catalysis.

This sequence belongs to the UPL family. K-HECT subfamily. Expressed in most tissues, including hypodermis, muscle, intestine, vulva, and neurons.

The catalysed reaction is S-ubiquitinyl-[E2 ubiquitin-conjugating enzyme]-L-cysteine + [acceptor protein]-L-lysine = [E2 ubiquitin-conjugating enzyme]-L-cysteine + N(6)-ubiquitinyl-[acceptor protein]-L-lysine.. It participates in protein modification; protein ubiquitination. In terms of biological role, E3 ubiquitin-protein ligase which accepts ubiquitin from an E2 ubiquitin-conjugating enzyme in the form of a thioester and then directly transfers the ubiquitin to targeted substrates. Involved in the ubiquitination and proteasomal-mediated degradation of cytoplasmic and mitochondrial proteins. Positively regulates lin-12 activity in the anchor cell (AC)/vulval precursor (VU) cell fate decision. Negatively regulates glp-1 activity in germline proliferation. May play a role in the formation of fibrous organelles, a hemidesmosome-like structure attaching muscles to the epidermis. Regulates germline DNA double-strand-break repair and apoptosis in response to DNA damage by recruiting E4 ubiquitin-protein ligase ufd-2 to DNA repair foci. This chain is E3 ubiquitin-protein ligase hecd-1, found in Caenorhabditis elegans.